The primary structure comprises 334 residues: Antho-RFamide neuropeptides (334 aa).

Residues 1–26 form the signal peptide; that stretch reads MLVAMTTASYVTILVTLLFHILTINA. A propeptide spanning residues 27 to 116 is cleaved from the precursor; it reads KTVTKRAKET…REFQGRFGRE (90 aa). 2 stretches are compositionally biased toward basic and acidic residues: residues 115–289 and 303–334; these read REQG…RELL and PQTRFRDVQMTRRNVAKKDKIEESNDEEANKS. Residues 115 to 334 are disordered; sequence REQGRFGREE…ESNDEEANKS (220 aa). A Phenylalanine amide modification is found at Phe120. Residues 122–125 constitute a propeptide that is removed on maturation; sequence REED. Phe129 carries the post-translational modification Phenylalanine amide. Residues 131 to 134 constitute a propeptide that is removed on maturation; it reads REED. Position 138 is a phenylalanine amide (Phe138). Residues 140-142 constitute a propeptide that is removed on maturation; the sequence is REE. Residue Phe146 is modified to Phenylalanine amide. Positions 148 to 151 are excised as a propeptide; it reads REED. Residue Phe155 is modified to Phenylalanine amide. Residues 157-160 constitute a propeptide that is removed on maturation; that stretch reads REED. Residue Phe164 is modified to Phenylalanine amide. The propeptide occupies 166 to 169; the sequence is REED. A Phenylalanine amide modification is found at Phe173. Positions 175–178 are excised as a propeptide; it reads REEE. Phe182 is modified (phenylalanine amide). Positions 184 to 187 are excised as a propeptide; the sequence is REED. Phe191 bears the Phenylalanine amide mark. Residues 193–196 constitute a propeptide that is removed on maturation; it reads REEE. At Phe200 the chain carries Phenylalanine amide. Positions 202-205 are excised as a propeptide; sequence REED. Phenylalanine amide is present on Phe209. Positions 211 to 214 are excised as a propeptide; sequence REED. Phe218 is subject to Phenylalanine amide. Residues 220 to 223 constitute a propeptide that is removed on maturation; it reads REEE. The residue at position 227 (Phe227) is a Phenylalanine amide. Residues 229-233 constitute a propeptide that is removed on maturation; the sequence is KRDED. Position 237 is a phenylalanine amide (Phe237). Positions 239-242 are excised as a propeptide; that stretch reads KRED. Phe246 bears the Phenylalanine amide mark. A propeptide spanning residues 248 to 252 is cleaved from the precursor; the sequence is KRDED. The residue at position 256 (Phe256) is a Phenylalanine amide. Residues 258–262 constitute a propeptide that is removed on maturation; the sequence is KRDED. Position 266 is a phenylalanine amide (Phe266). Positions 268–271 are excised as a propeptide; that stretch reads KRED. Residue Phe275 is modified to Phenylalanine amide. The propeptide occupies 277–280; the sequence is KRED. Phenylalanine amide is present on Phe284. Positions 286 to 334 are excised as a propeptide; it reads RELLAKLNKRTTSIQEDPQTRFRDVQMTRRNVAKKDKIEESNDEEANKS.

Belongs to the FARP (FMRFamide related peptide) family. As to expression, neurons associated with smooth muscle fibers.

It is found in the secreted. Functionally, not known but it could act as a transmitter at neuromuscular synapses. This is Antho-RFamide neuropeptides from Calliactis parasitica (Sea anemone).